The primary structure comprises 417 residues: Gamma-glutamyl phosphate reductase (417 aa).

It belongs to the gamma-glutamyl phosphate reductase family.

Its subcellular location is the cytoplasm. The catalysed reaction is L-glutamate 5-semialdehyde + phosphate + NADP(+) = L-glutamyl 5-phosphate + NADPH + H(+). It functions in the pathway amino-acid biosynthesis; L-proline biosynthesis; L-glutamate 5-semialdehyde from L-glutamate: step 2/2. Its function is as follows. Catalyzes the NADPH-dependent reduction of L-glutamate 5-phosphate into L-glutamate 5-semialdehyde and phosphate. The product spontaneously undergoes cyclization to form 1-pyrroline-5-carboxylate. This is Gamma-glutamyl phosphate reductase from Clostridium novyi (strain NT).